We begin with the raw amino-acid sequence, 1982 residues long: Chromodomain-helicase-DNA-binding protein Mi-2 homolog (1982 aa).

The span at 1–19 (MASEEENDDNFQEEEEAQE) shows a compositional bias: acidic residues. 3 disordered regions span residues 1 to 125 (MASE…PSVE), 192 to 348 (IQQE…KAKT), and 354 to 373 (FKKK…EDGE). Basic residues predominate over residues 52–62 (RKKKGKKRKTR). Residues S79 and S83 each carry the phosphoserine modification. Residues 104 to 116 (RKEEKQAAKEKES) are compositionally biased toward basic and acidic residues. Phosphoserine occurs at positions 201, 204, 210, and 221. The segment covering 218 to 232 (EPRSSRSSRNEKPDD) has biased composition (basic and acidic residues). A compositionally biased stretch (acidic residues) spans 233 to 247 (IYEEAVEEEEEEEEE). Residues 251–266 (PRRKRSGRGKKGRRPS) are compositionally biased toward basic residues. A phosphoserine mark is found at S284, S285, S292, S295, S299, S310, and S313. Positions 295–319 (SERDSDLEFERMLQKSDDSADEKEA) are enriched in basic and acidic residues. A compositionally biased stretch (basic residues) spans 354–364 (FKKKNKLKKTK). PHD-type zinc fingers lie at residues 377–424 (QDYC…CEAD) and 437–484 (QEFC…CSCP). 2 consecutive Chromo domains span residues 488 to 566 (GKAE…PPKF) and 612 to 673 (LIVQ…SETT). The tract at residues 671 to 712 (ETTQSRSKKSKKGRKSKLKVEDDEDRPVKHYTPPPEKPTTDL) is disordered. Over residues 676 to 687 (RSKKSKKGRKSK) the composition is skewed to basic residues. Phosphotyrosine is present on Y701. A Phosphothreonine modification is found at T702. The Helicase ATP-binding domain occupies 742–924 (RYSWGQGIDT…FHLLNFLSRD (183 aa)). 755–762 (DEMGLGKT) is an ATP binding site. Residues 875–878 (DEAH) carry the DEAH box motif. The region spanning 1056–1218 (LLSKMLKQLK…GANFTKQELD (163 aa)) is the Helicase C-terminal domain. 2 disordered regions span residues 1331-1396 (NYTD…RPLP) and 1536-1715 (EAPP…TGKG). Positions 1349-1361 (WQDNGSEYNSEYS) are enriched in polar residues. Positions 1364–1377 (SDEDGGDDDFDDQN) are enriched in acidic residues. Residues 1547–1568 (SATTSNSVTPATSAAPSPAPAS) are compositionally biased toward low complexity. 3 stretches are compositionally biased toward basic and acidic residues: residues 1569–1611 (EKGE…KQEN), 1621–1664 (KPSD…DKKP), and 1679–1689 (MIVKEDGELEK). Residues S1691 and S1694 each carry the phosphoserine modification. Residues 1700 to 1711 (AVAAATSAATGA) show a composition bias toward low complexity.

It belongs to the SNF2/RAD54 helicase family. In terms of assembly, interacts with the NuRD complex member HDAC1/Rpd3.

The protein localises to the nucleus. It is found in the chromosome. The catalysed reaction is ATP + H2O = ADP + phosphate + H(+). ATPase activity is stimulated by binding to either DNA or nucleosomes. In terms of biological role, ATP-dependent chromatin-remodeling factor which acts in nucleosome-remodeling by catalyzing ATP-dependent nucleosome mobilization. Involved in regulating transcription. Plays a vital role in development. Binds to a portion of Hunchback (HB) protein that is critical for repression of bithorax complex (BXC) genes. May also function in polycomb group (PcG) repression of Hox genes. May also act as part of the nucleosome remodeling and deacetylase complex (the NuRD complex) which participates in the remodeling of chromatin by deacetylating histones. The sequence is that of Chromodomain-helicase-DNA-binding protein Mi-2 homolog (Mi-2) from Drosophila melanogaster (Fruit fly).